A 493-amino-acid chain; its full sequence is CBL-interacting protein kinase 26 (493 aa).

A Protein kinase domain is found at 12–266 (YEIGRQLGQG…IPKIKRSAWY (255 aa)). Residues 18–26 (LGQGNFAKV) and Lys-41 each bind ATP. Asp-134 functions as the Proton acceptor in the catalytic mechanism. The tract at residues 152 to 181 (DFGLSALSESKRHDGLLHTTCGTPAYVAPE) is activation loop. Positions 311–332 (KVYTNGEATTSDSPECSNSDGK) are disordered. The span at 316–332 (GEATTSDSPECSNSDGK) shows a compositional bias: polar residues. The region spanning 320 to 360 (TSDSPECSNSDGKQASLSLPNLNAFDIISLSTGFDLSNLFE) is the NAF domain. The PPI stretch occupies residues 365–394 (RREERFTTRQPAAAIFAKLNELARRFKLKI). The segment at 465-493 (GQHQQPEQSMQGMQGEQQPSRLPSQQPQG) is disordered.

This sequence belongs to the protein kinase superfamily. CAMK Ser/Thr protein kinase family. SNF1 subfamily. The cofactor is Mn(2+).

It catalyses the reaction L-seryl-[protein] + ATP = O-phospho-L-seryl-[protein] + ADP + H(+). The catalysed reaction is L-threonyl-[protein] + ATP = O-phospho-L-threonyl-[protein] + ADP + H(+). CIPK serine-threonine protein kinases interact with CBL proteins. Binding of a CBL protein to the regulatory NAF domain of CIPK protein lead to the activation of the kinase in a calcium-dependent manner. The sequence is that of CBL-interacting protein kinase 26 (CIPK26) from Oryza sativa subsp. japonica (Rice).